A 116-amino-acid polypeptide reads, in one-letter code: Large ribosomal subunit protein bL20c (116 aa).

This sequence belongs to the bacterial ribosomal protein bL20 family.

It is found in the plastid. Its subcellular location is the chloroplast. In terms of biological role, binds directly to 23S ribosomal RNA and is necessary for the in vitro assembly process of the 50S ribosomal subunit. It is not involved in the protein synthesizing functions of that subunit. In Ipomoea purpurea (Common morning glory), this protein is Large ribosomal subunit protein bL20c.